Consider the following 195-residue polypeptide: MIASVRGEVLDIALDHVVIEAAGVGYKVMATPATLATLRRGSEARLITAMIVREDSQTLYGFADSDARDLFLTLLGVSGIGPSIALGALAMYDGPTLRQAIGDGDLTALTRIPKVGKKTAELLALTLRDKVGSSTSSGVAAAGGHGIRGPVVEALVGLGFAVKQAEEATDKVLANDPEATTSSALRAALSMLGKK.

The interval 1 to 63 (MIASVRGEVL…EDSQTLYGFA (63 aa)) is domain I. Residues 64 to 138 (DSDARDLFLT…DKVGSSTSSG (75 aa)) form a domain II region. The interval 138-142 (GVAAA) is flexible linker. The domain III stretch occupies residues 143-195 (GGHGIRGPVVEALVGLGFAVKQAEEATDKVLANDPEATTSSALRAALSMLGKK).

Belongs to the RuvA family. Homotetramer. Forms an RuvA(8)-RuvB(12)-Holliday junction (HJ) complex. HJ DNA is sandwiched between 2 RuvA tetramers; dsDNA enters through RuvA and exits via RuvB. An RuvB hexamer assembles on each DNA strand where it exits the tetramer. Each RuvB hexamer is contacted by two RuvA subunits (via domain III) on 2 adjacent RuvB subunits; this complex drives branch migration. In the full resolvosome a probable DNA-RuvA(4)-RuvB(12)-RuvC(2) complex forms which resolves the HJ.

The protein resides in the cytoplasm. Functionally, the RuvA-RuvB-RuvC complex processes Holliday junction (HJ) DNA during genetic recombination and DNA repair, while the RuvA-RuvB complex plays an important role in the rescue of blocked DNA replication forks via replication fork reversal (RFR). RuvA specifically binds to HJ cruciform DNA, conferring on it an open structure. The RuvB hexamer acts as an ATP-dependent pump, pulling dsDNA into and through the RuvAB complex. HJ branch migration allows RuvC to scan DNA until it finds its consensus sequence, where it cleaves and resolves the cruciform DNA. The polypeptide is Holliday junction branch migration complex subunit RuvA (Mycolicibacterium gilvum (strain PYR-GCK) (Mycobacterium gilvum (strain PYR-GCK))).